Consider the following 356-residue polypeptide: NADH-quinone oxidoreductase subunit H (356 aa).

Helical transmembrane passes span 18-38, 87-107, 120-140, 166-186, 205-225, 265-285, 292-312, and 333-353; these read IVMI…IAYI, GVFL…WAVI, VGIL…IMAG, IGFV…SAVV, ILNW…VSAL, AITT…LPPI, WVPG…LIAM, and FLPL…FAGI.

It belongs to the complex I subunit 1 family. As to quaternary structure, NDH-1 is composed of 14 different subunits. Subunits NuoA, H, J, K, L, M, N constitute the membrane sector of the complex.

It localises to the cell inner membrane. The enzyme catalyses a quinone + NADH + 5 H(+)(in) = a quinol + NAD(+) + 4 H(+)(out). NDH-1 shuttles electrons from NADH, via FMN and iron-sulfur (Fe-S) centers, to quinones in the respiratory chain. The immediate electron acceptor for the enzyme in this species is believed to be ubiquinone. Couples the redox reaction to proton translocation (for every two electrons transferred, four hydrogen ions are translocated across the cytoplasmic membrane), and thus conserves the redox energy in a proton gradient. This subunit may bind ubiquinone. In Bradyrhizobium sp. (strain BTAi1 / ATCC BAA-1182), this protein is NADH-quinone oxidoreductase subunit H.